A 466-amino-acid chain; its full sequence is Delta-1 crystallin (466 aa).

The protein belongs to the lyase 1 family. Argininosuccinate lyase subfamily. Homotetramer. As to expression, eye lens.

Its function is as follows. Delta crystallin, the principal crystallin in embryonic lens, is found only in birds and reptiles. Despite possessing the necessary catalytic residues, this protein does not function as an enzymatically active argininosuccinate lyase. This chain is Delta-1 crystallin (ASL1), found in Anas platyrhynchos (Mallard).